A 239-amino-acid chain; its full sequence is tRNA (guanine-N(1)-)-methyltransferase (239 aa).

S-adenosyl-L-methionine contacts are provided by residues G109 and 128–133 (IGDYVL).

Belongs to the RNA methyltransferase TrmD family. As to quaternary structure, homodimer.

The protein resides in the cytoplasm. The enzyme catalyses guanosine(37) in tRNA + S-adenosyl-L-methionine = N(1)-methylguanosine(37) in tRNA + S-adenosyl-L-homocysteine + H(+). In terms of biological role, specifically methylates guanosine-37 in various tRNAs. The polypeptide is tRNA (guanine-N(1)-)-methyltransferase (Thermus thermophilus (strain ATCC BAA-163 / DSM 7039 / HB27)).